Reading from the N-terminus, the 329-residue chain is GTPase Obg (329 aa).

One can recognise an Obg domain in the interval 1–159 (MQFIDEAKIF…MWVWLHLKLL (159 aa)). The OBG-type G domain occupies 160 to 327 (SDVGLVGLPN…LLANILSELQ (168 aa)). GTP-binding positions include 166–173 (GLPNAGKS), 191–195 (FTTLT), 212–215 (DIPG), 279–282 (TKTD), and 308–310 (SSY). Mg(2+)-binding residues include S173 and T193.

It belongs to the TRAFAC class OBG-HflX-like GTPase superfamily. OBG GTPase family. In terms of assembly, monomer. The cofactor is Mg(2+).

The protein localises to the cytoplasm. Functionally, an essential GTPase which binds GTP, GDP and possibly (p)ppGpp with moderate affinity, with high nucleotide exchange rates and a fairly low GTP hydrolysis rate. Plays a role in control of the cell cycle, stress response, ribosome biogenesis and in those bacteria that undergo differentiation, in morphogenesis control. This chain is GTPase Obg, found in Orientia tsutsugamushi (strain Ikeda) (Rickettsia tsutsugamushi).